Reading from the N-terminus, the 213-residue chain is UPF0329 protein ECU04_0110 (213 aa).

It belongs to the UPF0329 family.

The sequence is that of UPF0329 protein ECU04_0110 from Encephalitozoon cuniculi (strain GB-M1) (Microsporidian parasite).